Here is an 880-residue protein sequence, read N- to C-terminus: Alanine--tRNA ligase (880 aa).

H548, H552, C651, and H655 together coordinate Zn(2+).

The protein belongs to the class-II aminoacyl-tRNA synthetase family. Requires Zn(2+) as cofactor.

Its subcellular location is the cytoplasm. It carries out the reaction tRNA(Ala) + L-alanine + ATP = L-alanyl-tRNA(Ala) + AMP + diphosphate. Its function is as follows. Catalyzes the attachment of alanine to tRNA(Ala) in a two-step reaction: alanine is first activated by ATP to form Ala-AMP and then transferred to the acceptor end of tRNA(Ala). Also edits incorrectly charged Ser-tRNA(Ala) and Gly-tRNA(Ala) via its editing domain. The chain is Alanine--tRNA ligase from Tropheryma whipplei (strain TW08/27) (Whipple's bacillus).